Here is a 414-residue protein sequence, read N- to C-terminus: ALEYQYVMKNPKQLSFEKFSRRLSAKAFSVKKLLTNDDLSNDIHRGYLLLQGKSLDGLLETMIQEVKEIFESRLLKLTDWNTARVFDFCSSLVFEITFTTIYGKILAANKKQIISELRDDFLKFDDHFPYLVSDIPIQLLRNAEFMQKKIIKCLTPEKVAQMQRRSEIVQERQEMLKKYYGHEEFEIGAHHLGLLWASLANTIPAMFWAMYYLLQHPEAMEVLRDEIDSFLQSTGQKKGPGISVHFTREQLDSLVCLESAILEVLRLCSYSSIIREVQEDMDFSSESRSYRLRKGDFVAVFPPMIHNDPEVFDAPKDFRFDRFVEDGKKKTTFFKGGKKLKSYIIPFGLGTSKCPGRYFAINEMKLLVIILLTYFDLEVIDTKPIGLNHSRMFLGIQHPDSDISFRYKAKSWRS.

Position 354 (Cys354) interacts with heme.

It belongs to the cytochrome P450 family. Heme is required as a cofactor. Highly expressed in brain; also expressed in liver and kidney.

It localises to the endoplasmic reticulum membrane. It is found in the microsome membrane. The enzyme catalyses 25-hydroxycholesterol + reduced [NADPH--hemoprotein reductase] + O2 = 7alpha,25-dihydroxycholesterol + oxidized [NADPH--hemoprotein reductase] + H2O + H(+). The catalysed reaction is (25R)-cholest-5-ene-3beta,26-diol + reduced [NADPH--hemoprotein reductase] + O2 = (25R)-cholest-5-en-3beta,7alpha,26-triol + oxidized [NADPH--hemoprotein reductase] + H2O + H(+). The protein operates within lipid metabolism; bile acid biosynthesis. Oxysterol 7alpha-hydroxylase that mediates formation of 7-alpha,25-dihydroxycholesterol (7-alpha,25-OHC) from 25-hydroxycholesterol. Plays a key role in cell positioning and movement in lymphoid tissues: 7-alpha,25-dihydroxycholesterol (7-alpha,25-OHC) acts as a ligand for the G protein-coupled receptor GPR183/EBI2, a chemotactic receptor for a number of lymphoid cells. This chain is 25-hydroxycholesterol 7-alpha-hydroxylase (Cyp7b1), found in Rattus norvegicus (Rat).